The primary structure comprises 86 residues: UPF0213 protein OB0043 (86 aa).

A GIY-YIG domain is found at 3–80; that stretch reads EQHYVYILRC…LPRFEKLKLI (78 aa).

Belongs to the UPF0213 family.

This Oceanobacillus iheyensis (strain DSM 14371 / CIP 107618 / JCM 11309 / KCTC 3954 / HTE831) protein is UPF0213 protein OB0043.